The sequence spans 722 residues: Tudor domain-containing protein 3 (722 aa).

One can recognise a UBA domain in the interval 264 to 304 (LVDEKALRHITEMGFSKEASRQALMDNGNNLEAALNVLLNS). Disordered regions lie at residues 305–342 (NKQKPVTGPPLRGKGKGRGRIRSEDEEELGNARPSAPS), 355–453 (LSVE…RSYS), and 470–526 (SDTV…HFYD). The residue at position 327 (S327) is a Phosphoserine. Polar residues predominate over residues 362 to 388 (SQPQQLHQGQNRVSNTEQNGVKDNNQP). 2 stretches are compositionally biased toward basic and acidic residues: residues 392–409 (PRNDTRQPRNEKPPRFQR) and 442–453 (AEERTKCDRSYS). A Glycyl lysine isopeptide (Lys-Gly) (interchain with G-Cter in SUMO2) cross-link involves residue K541. Positions 626-686 (LWKSGDECLA…RPIQSEAWEE (61 aa)) constitute a Tudor domain. The span at 695 to 704 (EFRRGGDGQP) shows a compositional bias: basic and acidic residues. Residues 695–722 (EFRRGGDGQPRRSTRPTQQFYQPPRARN) are disordered. The segment at 702-722 (GQPRRSTRPTQQFYQPPRARN) is EBM motif; may mediate interaction with the EJC.

In terms of assembly, component of mRNA stress granules. Interacts with FMR1, FXR1, FXR2, EWSR1, FUS, SERBP1, EEF1A1 and DDX3X or DDX3Y, and with the small nuclear ribonucleoprotein-associated proteins SNRPB and SNRPN. Interacts with 'Lys-48'-linked tetra-ubiquitin, but not with monoubiquitin or 'Lys-63'-linked ubiquitin chains. May interact with the exon junction complex (EJC) composed at least of CASC3, EIF4A3, MAGOH and RBM8A. Interacts with POLR2A (via the C-terminal domain (CTD)).

The protein resides in the cytoplasm. It localises to the nucleus. In terms of biological role, scaffolding protein that specifically recognizes and binds dimethylarginine-containing proteins. Plays a role in the regulation of translation of target mRNAs by binding Arg/Gly-rich motifs (GAR) in dimethylarginine-containing proteins. In nucleus, acts as a coactivator: recognizes and binds asymmetric dimethylation on the core histone tails associated with transcriptional activation (H3R17me2a and H4R3me2a) and recruits proteins at these arginine-methylated loci. In cytoplasm, acts as an antiviral factor that participates in the assembly of stress granules together with G3BP1. The chain is Tudor domain-containing protein 3 (TDRD3) from Bos taurus (Bovine).